Reading from the N-terminus, the 479-residue chain is GTPase Der (479 aa).

EngA-type G domains follow at residues 3–166 (PVVA…AEEY) and 192–365 (LKLA…ASAT). GTP contacts are provided by residues 9–16 (GRPNVGKS), 56–60 (DTGGI), 118–121 (NKID), 198–205 (GRPNVGKS), 245–249 (DTAGV), and 310–313 (NKWD). Residues 366–450 (QRISTSKLTK…PIKVEFREPV (85 aa)) form the KH-like domain.

Belongs to the TRAFAC class TrmE-Era-EngA-EngB-Septin-like GTPase superfamily. EngA (Der) GTPase family. In terms of assembly, associates with the 50S ribosomal subunit.

Functionally, GTPase that plays an essential role in the late steps of ribosome biogenesis. This is GTPase Der from Idiomarina loihiensis (strain ATCC BAA-735 / DSM 15497 / L2-TR).